Consider the following 150-residue polypeptide: Large ribosomal subunit protein bL9 (150 aa).

Belongs to the bacterial ribosomal protein bL9 family.

In terms of biological role, binds to the 23S rRNA. The protein is Large ribosomal subunit protein bL9 of Aromatoleum aromaticum (strain DSM 19018 / LMG 30748 / EbN1) (Azoarcus sp. (strain EbN1)).